The sequence spans 170 residues: Neurotensin/neuromedin N (170 aa).

The signal sequence occupies residues 1–23 (MMAGMKIQLVCMILLAFSSWSLC).

It belongs to the neurotensin family. Interacts with NTSR1. Interacts with SORT1. Interacts with SORL1. Neurotensin is cleaved and degraded by Angiotensin-converting enzyme (ACE) and neprilysin (MME). As to expression, brain and gut.

The protein localises to the secreted. The protein resides in the cytoplasmic vesicle. Its subcellular location is the secretory vesicle. In terms of biological role, neurotensin may play an endocrine or paracrine role in the regulation of fat metabolism. It causes contraction of smooth muscle. The chain is Neurotensin/neuromedin N (NTS) from Bos taurus (Bovine).